Reading from the N-terminus, the 286-residue chain is MASAKEIKTKIASVKNTQKITSAMEMVAASKMRRAQERMAASRPYAENMRKVIGHVAQGTLEYKHPYLEVRDAKRVGYIVVATDRGLCGGLNVNLFKKVVSDVKKWKEQGADVEFCPIGARSVQFFKSFGGEVSAHASGLGDAPKLADLIGTVRVMLKAYNEGKLDRLYIVFNKFVNTMTQTPVIEQLLPLPKSDEEVASYPWDYIYEPDPKEVLDLLLTRYVESQVYQGVVENIASEQAARMVAMKAATDNAGEMIDDLQLVYNKARQAAITQELSEIVSGAAAV.

The protein belongs to the ATPase gamma chain family. In terms of assembly, F-type ATPases have 2 components, CF(1) - the catalytic core - and CF(0) - the membrane proton channel. CF(1) has five subunits: alpha(3), beta(3), gamma(1), delta(1), epsilon(1). CF(0) has three main subunits: a, b and c.

The protein localises to the cell inner membrane. In terms of biological role, produces ATP from ADP in the presence of a proton gradient across the membrane. The gamma chain is believed to be important in regulating ATPase activity and the flow of protons through the CF(0) complex. The protein is ATP synthase gamma chain of Shewanella frigidimarina (strain NCIMB 400).